A 168-amino-acid polypeptide reads, in one-letter code: uncharacterized protein (168 aa).

The 155-residue stretch at Ile-14–Lys-168 folds into the N-acetyltransferase domain.

Belongs to the acetyltransferase family.

This is an uncharacterized protein from Bacillus subtilis (strain 168).